Here is a 222-residue protein sequence, read N- to C-terminus: Protein-L-isoaspartate O-methyltransferase (222 aa).

Ser68 is an active-site residue.

Belongs to the methyltransferase superfamily. L-isoaspartyl/D-aspartyl protein methyltransferase family.

Its subcellular location is the cytoplasm. The catalysed reaction is [protein]-L-isoaspartate + S-adenosyl-L-methionine = [protein]-L-isoaspartate alpha-methyl ester + S-adenosyl-L-homocysteine. In terms of biological role, catalyzes the methyl esterification of L-isoaspartyl residues in peptides and proteins that result from spontaneous decomposition of normal L-aspartyl and L-asparaginyl residues. It plays a role in the repair and/or degradation of damaged proteins. The protein is Protein-L-isoaspartate O-methyltransferase of Koribacter versatilis (strain Ellin345).